The primary structure comprises 171 residues: Non-specific lipid transfer protein GPI-anchored 19 (171 aa).

A signal peptide spans 1 to 18 (MILAILALVIATFLYGGA). Cystine bridges form between cysteine 25–cysteine 66, cysteine 35–cysteine 50, cysteine 51–cysteine 93, and cysteine 64–cysteine 103. N-linked (GlcNAc...) asparagine glycans are attached at residues asparagine 72 and asparagine 82. The segment at 113 to 149 (LPANTPVGSPRSAPSPSGTTSPANTPSGSKKFPLSNE) is disordered. A compositionally biased stretch (low complexity) spans 118-141 (PVGSPRSAPSPSGTTSPANTPSGS). Serine 147 carries the GPI-anchor amidated serine lipid modification. The N-linked (GlcNAc...) asparagine glycan is linked to asparagine 148. Positions 148–171 (NESSSKSNVIILSFVSIALVLAII) are cleaved as a propeptide — removed in mature form.

This sequence belongs to the plant LTP family.

The protein resides in the cell membrane. Functionally, probable lipid transfer protein. The chain is Non-specific lipid transfer protein GPI-anchored 19 from Arabidopsis thaliana (Mouse-ear cress).